The primary structure comprises 74 residues: Cytochrome b559 subunit alpha (74 aa).

The chain crosses the membrane as a helical span at residues 22 to 36 (VIHTVTIPSLFVAGW). His-24 lines the heme pocket.

Belongs to the PsbE/PsbF family. Heterodimer of an alpha subunit and a beta subunit. PSII is composed of 1 copy each of membrane proteins PsbA, PsbB, PsbC, PsbD, PsbE, PsbF, PsbH, PsbI, PsbJ, PsbK, PsbL, PsbM, PsbT, PsbX, PsbY, PsbZ, Psb30/Ycf12, at least 3 peripheral proteins of the oxygen-evolving complex and a large number of cofactors. It forms dimeric complexes. Requires heme b as cofactor.

It localises to the plastid. The protein resides in the cyanelle thylakoid membrane. This b-type cytochrome is tightly associated with the reaction center of photosystem II (PSII). PSII is a light-driven water:plastoquinone oxidoreductase that uses light energy to abstract electrons from H(2)O, generating O(2) and a proton gradient subsequently used for ATP formation. It consists of a core antenna complex that captures photons, and an electron transfer chain that converts photonic excitation into a charge separation. The sequence is that of Cytochrome b559 subunit alpha from Cyanophora paradoxa.